Consider the following 392-residue polypeptide: MDENETNQLLMTSNQYPKEAVRKRQNSRNSGGSDSSRFSRKSFKLDYRLEEDVTKSKKGKDGRFVNPWPTWKNPSIPSLLRWVITERDHSSVPCSKELDKELPVLKPYFIDDPEEAGVRGAGLRVTWLGHATVMVEMDELILLTDPIFSARASPSQRMGPKRFRRAPCTVEELPRIDAVLVSHNHYDHLDCNSVIALNERFGNELRWFVPLGLLDWMQKCGCENVIELDWWEENCVPGHDKVTFVFTPSQHWCKRTLMDDNKVLWGSWSVLGPWNRFFFAGDTGYCSAFEEIGKRFGPFDLAAIPIGAYEPRWFMKYQHVDPEEAVKIHIDVQAKKSVAIHWGTFALANEHYLEPPAKLCEALEKYRLKTEDFLVLKHGESRYLNTDDEDVE.

At Met1 the chain carries N-acetylmethionine. The span at 1–16 shows a compositional bias: polar residues; that stretch reads MDENETNQLLMTSNQY. Residues 1–39 are disordered; sequence MDENETNQLLMTSNQYPKEAVRKRQNSRNSGGSDSSRFS. Residues 27–36 show a composition bias toward low complexity; the sequence is SRNSGGSDSS. His183 and His185 together coordinate Zn(2+). Residue Tyr186 participates in an N-acyl-1,2-diacyl-sn-glycero-3-phosphoethanolamine binding. Zn(2+) is bound by residues Asp187, His188, and His251. Deoxycholate-binding residues include Lys254 and Met258. A Zn(2+)-binding site is contributed by Asp282. Residue His319 participates in an N-acyl-1,2-diacyl-sn-glycero-3-phosphoethanolamine binding. His341 lines the Zn(2+) pocket. Ala346 provides a ligand contact to deoxycholate.

It belongs to the NAPE-PLD family. As to quaternary structure, homodimer. Bile acids promote the assembly of inactive monomers into an active dimer and enable catalysis. Zn(2+) is required as a cofactor. Widely expressed. Highest expression in brain, kidney and testis (at protein level). Expressed in adipose tissue (at protein level).

It is found in the golgi apparatus membrane. It localises to the early endosome membrane. The protein resides in the nucleus envelope. Its subcellular location is the nucleus. The protein localises to the nucleoplasm. The enzyme catalyses an N-acyl-1,2-diacyl-sn-glycero-3-phosphoethanolamine + H2O = an N-acylethanolamine + a 1,2-diacyl-sn-glycero-3-phosphate + H(+). The catalysed reaction is N-butanoyl-1-hexadecanoyl-2-(9Z,12Z-octadecadienoyl)-sn-glycero-3-phosphoethanolamine + H2O = N-butanoyl ethanolamine + 1-hexadecanoyl-2-(9Z,12Z-octadecadienoyl)-sn-glycero-3-phosphate + H(+). It carries out the reaction N-hexanoyl-1-hexadecanoyl-2-(9Z,12Z-octadecadienoyl)-sn-glycero-3-phosphoethanolamine + H2O = N-hexanoyl ethanolamine + 1-hexadecanoyl-2-(9Z,12Z-octadecadienoyl)-sn-glycero-3-phosphate + H(+). It catalyses the reaction N-octanoyl-1-hexadecanoyl-2-(9Z,12Z-octadecadienoyl)-sn-glycero-3-phosphoethanolamine + H2O = N-octanoyl ethanolamine + 1-hexadecanoyl-2-(9Z,12Z-octadecadienoyl)-sn-glycero-3-phosphate + H(+). The enzyme catalyses N-decanoyl-1-hexadecanoyl-2-(9Z,12Z-octadecadienoyl)-sn-glycero-3-phosphoethanolamine + H2O = N-decanoyl ethanolamine + 1-hexadecanoyl-2-(9Z,12Z-octadecadienoyl)-sn-glycero-3-phosphate + H(+). The catalysed reaction is N-dodecanoyl-1,2-di-(9Z-octadecenoyl)-sn-glycero-3-phosphoethanolamine + H2O = N-dodecanoylethanolamine + 1,2-di-(9Z-octadecenoyl)-sn-glycero-3-phosphate + H(+). It carries out the reaction N-tetradecanoyl-1,2-di-(9Z-octadecenoyl)-sn-glycero-3-phosphoethanolamine + H2O = N-tetradecanoylethanolamine + 1,2-di-(9Z-octadecenoyl)-sn-glycero-3-phosphate + H(+). It catalyses the reaction N-hexadecanoyl-1,2-di-(9Z-octadecenoyl)-sn-glycero-3-phosphoethanolamine + H2O = N-hexadecanoylethanolamine + 1,2-di-(9Z-octadecenoyl)-sn-glycero-3-phosphate + H(+). The enzyme catalyses N,1-dihexadecanoyl-2-(9Z,12Z-octadecadienoyl)-sn-glycero-3-phosphoethanolamine + H2O = 1-hexadecanoyl-2-(9Z,12Z-octadecadienoyl)-sn-glycero-3-phosphate + N-hexadecanoylethanolamine + H(+). The catalysed reaction is N-octadecanoyl-1,2-di-(9Z-octadecenoyl)-sn-glycero-3-phosphoethanolamine + H2O = N-octadecanoyl ethanolamine + 1,2-di-(9Z-octadecenoyl)-sn-glycero-3-phosphate + H(+). It carries out the reaction N,1,2-tri-(9Z-octadecenoyl)-sn-glycero-3-phosphoethanolamine + H2O = N-(9Z-octadecenoyl) ethanolamine + 1,2-di-(9Z-octadecenoyl)-sn-glycero-3-phosphate + H(+). It catalyses the reaction N-(5Z,8Z,11Z,14Z-eicosatetraenoyl)-1,2-diacyl-sn-glycero-3-phosphoethanolamine + H2O = N-(5Z,8Z,11Z,14Z-eicosatetraenoyl)-ethanolamine + a 1,2-diacyl-sn-glycero-3-phosphate + H(+). The enzyme catalyses N-(5Z,8Z,11Z,14Z-eicosatetraenoyl)-1,2-di-(9Z-octadecenoyl)-sn-glycero-3-phosphoethanolamine + H2O = N-(5Z,8Z,11Z,14Z-eicosatetraenoyl)-ethanolamine + 1,2-di-(9Z-octadecenoyl)-sn-glycero-3-phosphate + H(+). The catalysed reaction is 1-O-(1Z-octadecenoyl)-2-(9Z-octadecenoyl)-sn-glycero-3-phospho-N-hexadecanoyl-ethanolamine + H2O = 1-O-(1Z-octadecenoyl)-2-(9Z-octadecenoyl)-sn-glycero-3-phosphate + N-hexadecanoylethanolamine + H(+). It carries out the reaction N,1-diacyl-sn-glycero-3-phosphoethanolamine + H2O = an N-acylethanolamine + a 1-acyl-sn-glycero-3-phosphate + H(+). It catalyses the reaction N,1-dihexadecanoyl-sn-glycero-3-phosphoethanolamine + H2O = N-hexadecanoylethanolamine + 1-hexadecanoyl-sn-glycero-3-phosphate + H(+). The enzyme catalyses N-(5Z,8Z,11Z,14Z-eicosatetraenoyl)-1-(9Z-octadecenoyl)-sn-glycero-3-phosphoethanolamine + H2O = N-(5Z,8Z,11Z,14Z-eicosatetraenoyl)-ethanolamine + 1-(9Z-octadecenoyl)-sn-glycero-3-phosphate + H(+). Activated by divalent cations. Activated by bile acids. In terms of biological role, D-type phospholipase that hydrolyzes N-acyl-phosphatidylethanolamines (NAPEs) to produce bioactive N-acylethanolamines/fatty acid ethanolamides (NAEs/FAEs) and phosphatidic acid. Cleaves the terminal phosphodiester bond of diacyl- and alkenylacyl-NAPEs, primarily playing a role in the generation of long-chain saturated and monounsaturated NAEs in the brain. May control NAPE homeostasis in dopaminergic neuron membranes and regulate neuron survival, partly through RAC1 activation. As a regulator of lipid metabolism in the adipose tissue, mediates the crosstalk between adipocytes, gut microbiota and immune cells to control body temperature and weight. In particular, regulates energy homeostasis by promoting cold-induced brown or beige adipocyte differentiation program to generate heat from fatty acids and glucose. Has limited D-type phospholipase activity toward N-acyl lyso-NAPEs. In Bos taurus (Bovine), this protein is N-acyl-phosphatidylethanolamine-hydrolyzing phospholipase D (NAPEPLD).